A 257-amino-acid chain; its full sequence is Probable transcriptional regulatory protein SRU_2667 (257 aa).

Over residues 1–15 the composition is skewed to basic residues; the sequence is MAGHTRKWAKVKRKK. Residues 1–25 are disordered; the sequence is MAGHTRKWAKVKRKKQKDDRRKSKV.

This sequence belongs to the TACO1 family.

The protein resides in the cytoplasm. The protein is Probable transcriptional regulatory protein SRU_2667 of Salinibacter ruber (strain DSM 13855 / M31).